The primary structure comprises 196 residues: Glycerol-3-phosphate acyltransferase 2 (196 aa).

The next 5 membrane-spanning stretches (helical) occupy residues 2 to 22 (GWWLFPILGYFIGSIPFSYLI), 52 to 72 (VGGICLLLDALKGFFPVFITI), 80 to 100 (IVSLTAIATVLGHDFPIFMKF), 112 to 132 (IIFCLSWPTGLVFTLTWLVIV), and 137 to 156 (YASLGSLVALYVSALLGYLL).

This sequence belongs to the PlsY family. Probably interacts with PlsX.

It localises to the cell inner membrane. It catalyses the reaction an acyl phosphate + sn-glycerol 3-phosphate = a 1-acyl-sn-glycero-3-phosphate + phosphate. Its pathway is lipid metabolism; phospholipid metabolism. Catalyzes the transfer of an acyl group from acyl-phosphate (acyl-PO(4)) to glycerol-3-phosphate (G3P) to form lysophosphatidic acid (LPA). This enzyme utilizes acyl-phosphate as fatty acyl donor, but not acyl-CoA or acyl-ACP. The protein is Glycerol-3-phosphate acyltransferase 2 of Thermotoga maritima (strain ATCC 43589 / DSM 3109 / JCM 10099 / NBRC 100826 / MSB8).